A 1075-amino-acid polypeptide reads, in one-letter code: DNA-directed RNA polymerase subunit beta (1075 aa).

This sequence belongs to the RNA polymerase beta chain family. As to quaternary structure, in plastids the minimal PEP RNA polymerase catalytic core is composed of four subunits: alpha, beta, beta', and beta''. When a (nuclear-encoded) sigma factor is associated with the core the holoenzyme is formed, which can initiate transcription.

The protein localises to the plastid. The protein resides in the chloroplast. The enzyme catalyses RNA(n) + a ribonucleoside 5'-triphosphate = RNA(n+1) + diphosphate. In terms of biological role, DNA-dependent RNA polymerase catalyzes the transcription of DNA into RNA using the four ribonucleoside triphosphates as substrates. The protein is DNA-directed RNA polymerase subunit beta of Zea mays (Maize).